A 218-amino-acid chain; its full sequence is Peptide methionine sulfoxide reductase MsrA (218 aa).

Residue Cys-57 is part of the active site.

This sequence belongs to the MsrA Met sulfoxide reductase family.

It carries out the reaction L-methionyl-[protein] + [thioredoxin]-disulfide + H2O = L-methionyl-(S)-S-oxide-[protein] + [thioredoxin]-dithiol. The catalysed reaction is [thioredoxin]-disulfide + L-methionine + H2O = L-methionine (S)-S-oxide + [thioredoxin]-dithiol. Has an important function as a repair enzyme for proteins that have been inactivated by oxidation. Catalyzes the reversible oxidation-reduction of methionine sulfoxide in proteins to methionine. This Brucella suis biovar 1 (strain 1330) protein is Peptide methionine sulfoxide reductase MsrA.